Here is a 233-residue protein sequence, read N- to C-terminus: Coenzyme Q-binding protein COQ10 homolog, mitochondrial (233 aa).

The N-terminal 34 residues, 1–34, are a transit peptide targeting the mitochondrion; the sequence is MAEKATSLFLRAMEISEKQSFDVMRRNSSCTIRH.

It belongs to the COQ10 family. As to quaternary structure, interacts with coenzyme Q.

It is found in the mitochondrion inner membrane. Required for the function of coenzyme Q in the respiratory chain. May serve as a chaperone or may be involved in the transport of Q6 from its site of synthesis to the catalytic sites of the respiratory complexes. This chain is Coenzyme Q-binding protein COQ10 homolog, mitochondrial, found in Danio rerio (Zebrafish).